The primary structure comprises 437 residues: Protein arginine methyltransferase NDUFAF7, mitochondrial (437 aa).

The transit peptide at 1–42 (MSGLARLQRLQKFGFLMVSASANRPIQRYQCSRTEKPQKRTS) directs the protein to the mitochondrion.

The protein belongs to the NDUFAF7 family.

The protein resides in the mitochondrion. It catalyses the reaction L-arginyl-[protein] + 2 S-adenosyl-L-methionine = N(omega),N(omega)'-dimethyl-L-arginyl-[protein] + 2 S-adenosyl-L-homocysteine + 2 H(+). Arginine methyltransferase involved in the assembly or stability of mitochondrial NADH:ubiquinone oxidoreductase complex (complex I). Acts by mediating symmetric dimethylation of 'Arg-118' of ndufs2 after it assembles into the complex I, stabilizing the early intermediate complex. In Xenopus laevis (African clawed frog), this protein is Protein arginine methyltransferase NDUFAF7, mitochondrial.